Reading from the N-terminus, the 350-residue chain is MAMRQTPLTCSGHTRPVVDLAFSGITPYGYFLISACKDGKPMLRQGDTGDWIGTFLGHKGAVWGATLNKDATKAATAAADFTAKVWDAVSGDELMTLAHKHIVKTVDFTQDSNYLLTGGQDKLLRIYDLNKPEAEPKEISGHTSGIKKALWCSEDKQILSADDKTVRLWDHATMTEVKSLNFNMSVSSMEYIPEGEILVITYGRSIAFHSAVSLEPIKSFEAPATINSASLHPEKEFLVAGGEDFKLYKYDYNSGEELESYKGHFGPIHCVRFSPDGELYASGSEDGTLRLWQTVVGKTYGLWKCVLPEEDSGELAKPKIGFPETAEEELEEIASENSDSIYSSTPEVKA.

WD repeat units lie at residues 12–56 (GHTR…GTFL), 57–96 (GHKG…ELMT), 98–137 (AHKH…AEPK), 141–179 (GHTS…EVKS), 180–212 (LNFN…HSAV), 221–262 (EAPA…ESYK), and 263–302 (GHFG…TYGL). Phosphoserine is present on residues Ser312, Ser335, and Ser338. Residues 326 to 350 (AEEELEEIASENSDSIYSSTPEVKA) are disordered. The segment covering 337 to 350 (NSDSIYSSTPEVKA) has biased composition (polar residues). Position 342 is a phosphotyrosine (Tyr342).

Belongs to the WD repeat STRAP family. As to quaternary structure, part of the core SMN complex that contains SMN1, GEMIN2/SIP1, DDX20/GEMIN3, GEMIN4, GEMIN5, GEMIN6, GEMIN7, GEMIN8 and STRAP/UNRIP. Part of the SMN-Sm complex that contains SMN1, GEMIN2/SIP1, DDX20/GEMIN3, GEMIN4, GEMIN5, GEMIN6, GEMIN7, GEMIN8, STRAP/UNRIP and the Sm proteins SNRPB, SNRPD1, SNRPD2, SNRPD3, SNRPE, SNRPF and SNRPG. Interacts directly with GEMIN6 and GEMIN7. Associates with the SMN complex in the cytoplasm but not in the nucleus. Also interacts with CSDE1/UNR and MAWBP. Interacts with PDPK1. Interacts with TRIM48.

The protein localises to the cytoplasm. The protein resides in the nucleus. Its function is as follows. The SMN complex catalyzes the assembly of small nuclear ribonucleoproteins (snRNPs), the building blocks of the spliceosome, and thereby plays an important role in the splicing of cellular pre-mRNAs. Most spliceosomal snRNPs contain a common set of Sm proteins SNRPB, SNRPD1, SNRPD2, SNRPD3, SNRPE, SNRPF and SNRPG that assemble in a heptameric protein ring on the Sm site of the small nuclear RNA to form the core snRNP (Sm core). In the cytosol, the Sm proteins SNRPD1, SNRPD2, SNRPE, SNRPF and SNRPG are trapped in an inactive 6S pICln-Sm complex by the chaperone CLNS1A that controls the assembly of the core snRNP. To assemble core snRNPs, the SMN complex accepts the trapped 5Sm proteins from CLNS1A forming an intermediate. Binding of snRNA inside 5Sm triggers eviction of the SMN complex, thereby allowing binding of SNRPD3 and SNRPB to complete assembly of the core snRNP. STRAP plays a role in the cellular distribution of the SMN complex. Negatively regulates TGF-beta signaling but positively regulates the PDPK1 kinase activity by enhancing its autophosphorylation and by significantly reducing the association of PDPK1 with 14-3-3 protein. This Rattus norvegicus (Rat) protein is Serine-threonine kinase receptor-associated protein (Strap).